The chain runs to 288 residues: Polyamine aminopropyltransferase (288 aa).

A PABS domain is found at 9 to 238 (ETLHDQFGQY…GIMTFAWATD (230 aa)). Gln33 contributes to the S-methyl-5'-thioadenosine binding site. His64 and Asp88 together coordinate spermidine. Residues Glu108 and 140–141 (DG) contribute to the S-methyl-5'-thioadenosine site. The Proton acceptor role is filled by Asp158. Residue 158 to 161 (DCTD) coordinates spermidine. S-methyl-5'-thioadenosine is bound at residue Pro165.

It belongs to the spermidine/spermine synthase family. Homodimer or homotetramer.

It localises to the cytoplasm. The catalysed reaction is S-adenosyl 3-(methylsulfanyl)propylamine + putrescine = S-methyl-5'-thioadenosine + spermidine + H(+). Its pathway is amine and polyamine biosynthesis; spermidine biosynthesis; spermidine from putrescine: step 1/1. Its function is as follows. Catalyzes the irreversible transfer of a propylamine group from the amino donor S-adenosylmethioninamine (decarboxy-AdoMet) to putrescine (1,4-diaminobutane) to yield spermidine. The sequence is that of Polyamine aminopropyltransferase from Shigella dysenteriae serotype 1 (strain Sd197).